The sequence spans 369 residues: DNA replication and repair protein RecF (369 aa).

30–37 contacts ATP; it reads GQNGMGKT.

This sequence belongs to the RecF family.

It localises to the cytoplasm. In terms of biological role, the RecF protein is involved in DNA metabolism; it is required for DNA replication and normal SOS inducibility. RecF binds preferentially to single-stranded, linear DNA. It also seems to bind ATP. The chain is DNA replication and repair protein RecF from Bacteroides thetaiotaomicron (strain ATCC 29148 / DSM 2079 / JCM 5827 / CCUG 10774 / NCTC 10582 / VPI-5482 / E50).